Consider the following 187-residue polypeptide: Large ribosomal subunit protein uL5 (187 aa).

This sequence belongs to the universal ribosomal protein uL5 family. Part of the 50S ribosomal subunit; part of the 5S rRNA/L5/L18/L25 subcomplex. Contacts the 5S rRNA and the P site tRNA. Forms a bridge to the 30S subunit in the 70S ribosome.

Its function is as follows. This is one of the proteins that bind and probably mediate the attachment of the 5S RNA into the large ribosomal subunit, where it forms part of the central protuberance. In the 70S ribosome it contacts protein S13 of the 30S subunit (bridge B1b), connecting the 2 subunits; this bridge is implicated in subunit movement. Contacts the P site tRNA; the 5S rRNA and some of its associated proteins might help stabilize positioning of ribosome-bound tRNAs. The sequence is that of Large ribosomal subunit protein uL5 from Mycobacteroides abscessus (strain ATCC 19977 / DSM 44196 / CCUG 20993 / CIP 104536 / JCM 13569 / NCTC 13031 / TMC 1543 / L948) (Mycobacterium abscessus).